The following is a 276-amino-acid chain: Large ribosomal subunit protein uL2 (276 aa).

The disordered stretch occupies residues 219 to 276; that stretch reads TVRGSAMNPNDHPHGGGEGRTSIGRPAPVTPWGKPALGYKTRDSKKASNKMIVSRRKK.

It belongs to the universal ribosomal protein uL2 family. In terms of assembly, part of the 50S ribosomal subunit. Forms a bridge to the 30S subunit in the 70S ribosome.

Its function is as follows. One of the primary rRNA binding proteins. Required for association of the 30S and 50S subunits to form the 70S ribosome, for tRNA binding and peptide bond formation. It has been suggested to have peptidyltransferase activity; this is somewhat controversial. Makes several contacts with the 16S rRNA in the 70S ribosome. This chain is Large ribosomal subunit protein uL2, found in Alkaliphilus oremlandii (strain OhILAs) (Clostridium oremlandii (strain OhILAs)).